Reading from the N-terminus, the 349-residue chain is Histidinol-phosphate aminotransferase (349 aa).

K206 is modified (N6-(pyridoxal phosphate)lysine).

The protein belongs to the class-II pyridoxal-phosphate-dependent aminotransferase family. Histidinol-phosphate aminotransferase subfamily. Homodimer. The cofactor is pyridoxal 5'-phosphate.

The catalysed reaction is L-histidinol phosphate + 2-oxoglutarate = 3-(imidazol-4-yl)-2-oxopropyl phosphate + L-glutamate. It participates in amino-acid biosynthesis; L-histidine biosynthesis; L-histidine from 5-phospho-alpha-D-ribose 1-diphosphate: step 7/9. The chain is Histidinol-phosphate aminotransferase from Hydrogenobaculum sp. (strain Y04AAS1).